Reading from the N-terminus, the 85-residue chain is Contulakin-Lt2 (85 aa).

An N-terminal signal peptide occupies residues 1-22 (MQMAYWVMVMMMVGITAPLSEG). The propeptide occupies 23–61 (RKLNDAIRGLVPNDLTPQLLQSLVSRRHRVFHLDNTYLK). C65 and C70 are oxidised to a cystine. The propeptide occupies 76 to 85 (RRRDLKKRNK).

Belongs to the conotoxin C superfamily. As to expression, expressed by the venom duct.

Its subcellular location is the secreted. Its function is as follows. Acts as an agonist of neurotensin receptors. It binds to human neurotensin type 1 receptor (NTSR1), rat neurotensin types 1 and 2 receptors (NTSR1/NTSR2) and mouse neurotensin type 3 receptor (SORT1). The protein is Contulakin-Lt2 of Conus litteratus (Lettered cone).